We begin with the raw amino-acid sequence, 490 residues long: Interferon-induced protein with tetratricopeptide repeats 3 (490 aa).

TPR repeat units lie at residues 51–84, 94–127, 136–169, 172–206, 207–240, and 241–274; these read ATMYNLLAYIKHLDGNNEAALECLRQAEELIQQE, LVTWGNYVWVYYHLGRLSDAQIYVDKVKQTCKKF, SELDCEEGWTQLKCGRNERAKVCFEKALEEKPNN, FSSGLAIAMYHLDNNPEKQFSTDVLKQAIELSPDN, QYVKVLLGLKLQKMNKEAEGEQFVEEALEKAPCQ, and TDVLRSAAKFYRRKGDLDKAIELFQRVLESTPNN. Ser-203 is subject to Phosphoserine. The interval 386-409 is disordered; it reads LSISKKSTDKEEIKDQPQNVSENL. Positions 391-400 are enriched in basic and acidic residues; sequence KSTDKEEIKD. 2 TPR repeats span residues 415 to 448 and 450 to 481; these read PNYWYLQGLIHKQNGDLLQAAKCYEKELGRLLRD and PSGIGSIFLSASELEDGSEEMGQGAVSSSPRE. Residues 467 to 490 form a disordered region; sequence SEEMGQGAVSSSPRELLSNSEQLN. A compositionally biased stretch (polar residues) spans 474–490; that stretch reads AVSSSPRELLSNSEQLN. Residue Ser-478 is modified to Phosphoserine.

Belongs to the IFIT family. In terms of assembly, component of an interferon-dependent multiprotein complex, at least composed of IFIT1, IFIT2 and IFIT3. Interacts with IFIT1 and IFIT2. Interacts (via N-terminus) with MAVS, TBK1, TRAF6 and RIGI. Interacts with COPS5.

It localises to the cytoplasm. The protein localises to the mitochondrion. In terms of biological role, IFN-induced antiviral protein which acts as an inhibitor of cellular as well as viral processes, cell migration, proliferation, signaling, and viral replication. Enhances MAVS-mediated host antiviral responses by serving as an adapter bridging TBK1 to MAVS which leads to the activation of TBK1 and phosphorylation of IRF3 and phosphorylated IRF3 translocates into nucleus to promote antiviral gene transcription. Exhibits an antiproliferative activity via the up-regulation of cell cycle negative regulators CDKN1A/p21 and CDKN1B/p27. Normally, CDKN1B/p27 turnover is regulated by COPS5, which binds CDKN1B/p27 in the nucleus and exports it to the cytoplasm for ubiquitin-dependent degradation. IFIT3 sequesters COPS5 in the cytoplasm, thereby increasing nuclear CDKN1B/p27 protein levels. Up-regulates CDKN1A/p21 by down-regulating MYC, a repressor of CDKN1A/p21. Can negatively regulate the apoptotic effects of IFIT2. This chain is Interferon-induced protein with tetratricopeptide repeats 3 (IFIT3), found in Pan troglodytes (Chimpanzee).